The chain runs to 282 residues: tRNA pseudouridine synthase B (282 aa).

Asp-36 (nucleophile) is an active-site residue.

Belongs to the pseudouridine synthase TruB family. Type 1 subfamily.

It carries out the reaction uridine(55) in tRNA = pseudouridine(55) in tRNA. Functionally, responsible for synthesis of pseudouridine from uracil-55 in the psi GC loop of transfer RNAs. This chain is tRNA pseudouridine synthase B, found in Mycoplasmopsis pulmonis (strain UAB CTIP) (Mycoplasma pulmonis).